The sequence spans 433 residues: Adenylosuccinate synthetase (433 aa).

GTP contacts are provided by residues glycine 11–lysine 17 and glycine 39–threonine 41. Aspartate 12 acts as the Proton acceptor in catalysis. Mg(2+)-binding residues include aspartate 12 and glycine 39. IMP contacts are provided by residues aspartate 12–lysine 15, asparagine 37–histidine 40, threonine 134, arginine 148, asparagine 230, threonine 245, and arginine 309. Histidine 40 (proton donor) is an active-site residue. Residue valine 305 to arginine 311 coordinates substrate. GTP is bound by residues arginine 311, lysine 337–aspartate 339, and glycine 419–glycine 421.

The protein belongs to the adenylosuccinate synthetase family. Homodimer. Mg(2+) serves as cofactor.

It localises to the cytoplasm. The enzyme catalyses IMP + L-aspartate + GTP = N(6)-(1,2-dicarboxyethyl)-AMP + GDP + phosphate + 2 H(+). Its pathway is purine metabolism; AMP biosynthesis via de novo pathway; AMP from IMP: step 1/2. In terms of biological role, plays an important role in the de novo pathway and in the salvage pathway of purine nucleotide biosynthesis. Catalyzes the first committed step in the biosynthesis of AMP from IMP. The polypeptide is Adenylosuccinate synthetase (Saccharomyces cerevisiae (strain Lalvin EC1118 / Prise de mousse) (Baker's yeast)).